The chain runs to 439 residues: uncharacterized protein (439 aa).

An N-terminal signal peptide occupies residues 1–19; sequence MKKLLLTASIICLASAGLA.

This is an uncharacterized protein from Rickettsia felis (strain ATCC VR-1525 / URRWXCal2) (Rickettsia azadi).